Here is a 209-residue protein sequence, read N- to C-terminus: Ion-translocating oxidoreductase complex subunit G (209 aa).

A helical transmembrane segment spans residues 9 to 29 (GLILAVFACVSTGLVALTYAL). The residue at position 175 (Thr-175) is an FMN phosphoryl threonine.

It belongs to the RnfG family. In terms of assembly, the complex is composed of six subunits: RnfA, RnfB, RnfC, RnfD, RnfE and RnfG. Requires FMN as cofactor.

Its subcellular location is the cell inner membrane. Functionally, part of a membrane-bound complex that couples electron transfer with translocation of ions across the membrane. This is Ion-translocating oxidoreductase complex subunit G from Vibrio cholerae serotype O1 (strain ATCC 39315 / El Tor Inaba N16961).